The following is a 66-amino-acid chain: Ocellatin-PT5 (66 aa).

Residues 1–22 (MAFLKKSLFLVLFLGLVSLSIC) form the signal peptide. Residues 23–39 (DEEKRQDEDDDDDDDEE) constitute a propeptide that is removed on maturation. The residue at position 66 (Val-66) is a Valine amide.

As to expression, expressed by the skin glands.

The protein resides in the secreted. In terms of biological role, has antibacterial activity against Gram-negative bacterium E.coli ATCC 25922 (MIC=300 uM) but not against S.pneumoniae ATCC 700603, S.choleraesuis ATCC 14028 or Gram-positive bacterium S.aureus ATCC 29313. Shows very little hemolytic activity and no cytotoxicity. This is Ocellatin-PT5 from Leptodactylus pustulatus (Ceara white-lipped frog).